A 239-amino-acid polypeptide reads, in one-letter code: MKQKSIEMLVQGASSLGITLEMFHVEHFQKFYSLLLEWNQKMNLTAITEEEEVVIKHFLDSLSVIKSGKIKGGEKVIDIGTGAGFPGIPLKIVFPEIGLTLLEASKKKVNFLNFLSQVLLFEGIEVIHGRAEELGKVERFREKFDIATARAVAPLNILLEYAVPFVRVGGHFIAMKGRDIEEVYQCKNALEELKCEIEDVIEVRLPFSDILHHLIVVKKVDVLPSKYPRREKAIRTKPL.

S-adenosyl-L-methionine is bound by residues Gly80, Phe85, 103 to 105, 131 to 132, and Arg150; these read EAS and AE.

The protein belongs to the methyltransferase superfamily. RNA methyltransferase RsmG family.

The protein localises to the cytoplasm. Specifically methylates the N7 position of a guanine in 16S rRNA. The protein is Ribosomal RNA small subunit methyltransferase G of Caldanaerobacter subterraneus subsp. tengcongensis (strain DSM 15242 / JCM 11007 / NBRC 100824 / MB4) (Thermoanaerobacter tengcongensis).